The chain runs to 428 residues: Histidine--tRNA ligase (428 aa).

The protein belongs to the class-II aminoacyl-tRNA synthetase family. Homodimer.

It is found in the cytoplasm. It catalyses the reaction tRNA(His) + L-histidine + ATP = L-histidyl-tRNA(His) + AMP + diphosphate + H(+). In Halalkalibacterium halodurans (strain ATCC BAA-125 / DSM 18197 / FERM 7344 / JCM 9153 / C-125) (Bacillus halodurans), this protein is Histidine--tRNA ligase.